We begin with the raw amino-acid sequence, 192 residues long: Ion-translocating oxidoreductase complex subunit B (192 aa).

The hydrophobic stretch occupies residues 1 to 26 (MNAIWIAVAAVSLLGLAFGAILGYAS). The region spanning 32 to 91 (EDDPVVEKIDEILPQSQCGQCGYPGCRPYAEAISCNGEKINRCAPGGEAVMLKIAELLNV) is the 4Fe-4S domain. 12 residues coordinate [4Fe-4S] cluster: cysteine 49, cysteine 52, cysteine 57, cysteine 74, cysteine 117, cysteine 120, cysteine 123, cysteine 127, cysteine 147, cysteine 150, cysteine 153, and cysteine 157. 2 consecutive 4Fe-4S ferredoxin-type domains span residues 108–137 (MVAV…GATR) and 138–167 (AMHT…LQPV).

Belongs to the 4Fe4S bacterial-type ferredoxin family. RnfB subfamily. In terms of assembly, the complex is composed of six subunits: RsxA, RsxB, RsxC, RsxD, RsxE and RsxG. [4Fe-4S] cluster serves as cofactor.

Its subcellular location is the cell inner membrane. In terms of biological role, part of a membrane-bound complex that couples electron transfer with translocation of ions across the membrane. Required to maintain the reduced state of SoxR. The protein is Ion-translocating oxidoreductase complex subunit B of Shigella dysenteriae serotype 1 (strain Sd197).